The following is a 62-amino-acid chain: Sperm protamine P1 (62 aa).

The segment at 1-62 (MARYRHSXSR…RYSRRRRRRY (62 aa)) is disordered.

It belongs to the protamine P1 family. Testis.

The protein localises to the nucleus. Its subcellular location is the chromosome. Protamines substitute for histones in the chromatin of sperm during the haploid phase of spermatogenesis. They compact sperm DNA into a highly condensed, stable and inactive complex. The polypeptide is Sperm protamine P1 (PRM1) (Petrogale xanthopus (Yellow-footed rock wallaby)).